The sequence spans 164 residues: Lipoprotein signal peptidase (164 aa).

A run of 3 helical transmembrane segments spans residues 12–32 (FLWL…WIVA), 70–90 (WLFT…LKET), and 93–113 (QQVM…GNVF). Residues aspartate 123 and aspartate 141 contribute to the active site. A helical membrane pass occupies residues 133-153 (YWPAFNVADSAICLGAFLLVI).

It belongs to the peptidase A8 family.

It is found in the cell inner membrane. The enzyme catalyses Release of signal peptides from bacterial membrane prolipoproteins. Hydrolyzes -Xaa-Yaa-Zaa-|-(S,diacylglyceryl)Cys-, in which Xaa is hydrophobic (preferably Leu), and Yaa (Ala or Ser) and Zaa (Gly or Ala) have small, neutral side chains.. It functions in the pathway protein modification; lipoprotein biosynthesis (signal peptide cleavage). Its function is as follows. This protein specifically catalyzes the removal of signal peptides from prolipoproteins. The polypeptide is Lipoprotein signal peptidase (Pseudoalteromonas atlantica (strain T6c / ATCC BAA-1087)).